We begin with the raw amino-acid sequence, 333 residues long: Transcription initiation factor IIB (333 aa).

Residues 33 to 64 (EVYRCPICGNDKFIYNYERGEVVCIVCGAVVQ) form a TFIIB-type zinc finger. Positions 37, 40, 56, and 59 each coordinate Zn(2+). Repeat copies occupy residues 149 to 232 (QELE…LREL) and 243 to 324 (LYIS…ELAK).

Belongs to the TFIIB family.

Stabilizes TBP binding to an archaeal box-A promoter. Also responsible for recruiting RNA polymerase II to the pre-initiation complex (DNA-TBP-TFIIB). The chain is Transcription initiation factor IIB from Pyrobaculum neutrophilum (strain DSM 2338 / JCM 9278 / NBRC 100436 / V24Sta) (Thermoproteus neutrophilus).